Here is a 289-residue protein sequence, read N- to C-terminus: Type II methyltransferase M.MjaIII (289 aa).

Residues Trp9, Lys13, Asp63, and Asp199 each contribute to the S-adenosyl-L-methionine site.

It belongs to the N(4)/N(6)-methyltransferase family.

It catalyses the reaction a 2'-deoxyadenosine in DNA + S-adenosyl-L-methionine = an N(6)-methyl-2'-deoxyadenosine in DNA + S-adenosyl-L-homocysteine + H(+). An alpha subtype methylase that recognizes the double-stranded sequence 5'-GATC-3', methylates A-2 on both strands, and protects the DNA from cleavage by the MjaIII endonuclease. The sequence is that of Type II methyltransferase M.MjaIII (mjaIIIM) from Methanocaldococcus jannaschii (strain ATCC 43067 / DSM 2661 / JAL-1 / JCM 10045 / NBRC 100440) (Methanococcus jannaschii).